The sequence spans 689 residues: MFERNQKTIFVLDHTRYFSIASEEYISMDFLKGKPSADGGATGAAGNATGSGGSQFSKSLWTCACESSIEYCRVVWDLFPGKKHVRFIVSDTAAHIVNTWRPSTQNMAHVMNAMLIVGVPSRNVPTSSDYSVIHGLRAAIEALAEPTDEQLAAMADFGTDELPRIPNKGRVICITSARDNTSMKSLEDIFNTVLVQQNTLAAPPSKKGLVIDHCHLVILNIVPLGVESLVTNRSLLKISPLLDVEIHTVSAPDISYKLTHLILNHYDLASTTVTNIPMKEEQNANSSANYDVEILHSRRAHSITCGPDFSLPTSIKQGATYETVTLKWCTPRGCGSADLQPCLGQFLVTPVDVTSRPSSCLINFLLNGRSVLLEMPRKTGSKATSHMLSARGGEIFVHSLCITRSCMDEAPSITDGPGGRVSDYRTAELGQLIKMSRVVPLKVKDPSAPPLTRRLPRYFPLTTSSSILFHLQRHISWLPHFLHLLVKEDMDKQDEVRCQQHIHELYKSASRGDVLPFTHTNGARLKLSKAKDQYRLLYRELEQLIQLNATTMHHKNLLESLQSLRAAYGDAPLKSEPGASLLRTYTESPLSPERLEPISSVGASGSSSSNSLLKASKRRMSSCGQRSLLDIISSAERSQSNKRLDFSGRLCTPLGQVAKLYPDFGTKDKDTVTTGASITPNVKEESVRS.

A coiled-coil region spans residues Asn-521–Thr-550. Disordered stretches follow at residues Pro-592–Arg-619 and Gly-665–Ser-689. A compositionally biased stretch (low complexity) spans Ser-599–Lys-614. The Nuclear localization signal (NLS) motif lies at Leu-613–Arg-619.

It belongs to the Integrator subunit 13 family. As to quaternary structure, belongs to the multiprotein complex Integrator, at least composed of IntS1, IntS2, IntS3, IntS4, omd/IntS5, IntS6, defl/IntS7, IntS8, IntS9, IntS10, IntS11, IntS12, asun/IntS13, IntS14 and IntS15. The core complex associates with protein phosphatase 2A subunits mts/PP2A and Pp2A-29B, to form the Integrator-PP2A (INTAC) complex. Phosphorylated. In terms of tissue distribution, expressed in nurse cells at stages 9-10 of oogenesis and exported to the oocyte. Also expressed in the follicle cells surrounding the oocyte.

It is found in the nucleus. The protein resides in the cytoplasm. The protein localises to the perinuclear region. In terms of biological role, component of the integrator complex, a multiprotein complex that terminates RNA polymerase II (Pol II) transcription in the promoter-proximal region of genes. The integrator complex provides a quality checkpoint during transcription elongation by driving premature transcription termination of transcripts that are unfavorably configured for transcriptional elongation: the complex terminates transcription by (1) catalyzing dephosphorylation of the C-terminal domain (CTD) of Pol II subunit Polr2A/Rbp1 and Spt5, and (2) degrading the exiting nascent RNA transcript via endonuclease activity. The integrator complex is also involved in the 3'-end processing of the U7 snRNA, and also the spliceosomal snRNAs U1, U2, U4 and U5. Plays a role as a regulator of spermatogenesis. Crucial regulator of the mitotic cell cycle and development. Required for the correct dynein-dynactin perinuclear localization important for nucleus-centrosome coupling that occur upon meiotic progression of primary spermatocytes. Plays a role in sperm motility and fertility. May have a role in the PNG/PLU/GNU pathway. The chain is Protein asunder from Drosophila melanogaster (Fruit fly).